The sequence spans 215 residues: 3-demethoxyubiquinol 3-hydroxylase (215 aa).

Fe cation contacts are provided by Glu-64, Glu-94, His-97, Glu-146, Glu-178, and His-181.

This sequence belongs to the COQ7 family. The cofactor is Fe cation.

It is found in the cell membrane. It carries out the reaction a 5-methoxy-2-methyl-3-(all-trans-polyprenyl)benzene-1,4-diol + AH2 + O2 = a 3-demethylubiquinol + A + H2O. It participates in cofactor biosynthesis; ubiquinone biosynthesis. In terms of biological role, catalyzes the hydroxylation of 2-nonaprenyl-3-methyl-6-methoxy-1,4-benzoquinol during ubiquinone biosynthesis. The chain is 3-demethoxyubiquinol 3-hydroxylase from Coxiella burnetii (strain RSA 331 / Henzerling II).